Here is a 122-residue protein sequence, read N- to C-terminus: Large ribosomal subunit protein uL14 (122 aa).

This sequence belongs to the universal ribosomal protein uL14 family. As to quaternary structure, part of the 50S ribosomal subunit. Forms a cluster with proteins L3 and L19. In the 70S ribosome, L14 and L19 interact and together make contacts with the 16S rRNA in bridges B5 and B8.

In terms of biological role, binds to 23S rRNA. Forms part of two intersubunit bridges in the 70S ribosome. This Syntrophotalea carbinolica (strain DSM 2380 / NBRC 103641 / GraBd1) (Pelobacter carbinolicus) protein is Large ribosomal subunit protein uL14.